The sequence spans 1484 residues: Cystic fibrosis transmembrane conductance regulator (1484 aa).

Residues 1-77 (MQRSPLERAN…KLINALRRCF (77 aa)) lie on the Cytoplasmic side of the membrane. Residues 78 to 98 (FWRFMFYGLLLYLGEVTKAVQ) traverse the membrane as a helical segment. One can recognise an ABC transmembrane type-1 1 domain in the interval 81–365 (FMFYGLLLYL…WAVQMWYDSI (285 aa)). Residues 99–122 (PLLLGRIIASYDPDNAHERSIAYY) lie on the Extracellular side of the membrane. The helical transmembrane segment at 123–146 (LGIGLCLLFIVRTLLLHPAVFGLH) threads the bilayer. Over 147–195 (HIGMQMRIALFSLIYKKTLKLSSRVLDKISTGQLVSLLSNNLNKFDEGL) the chain is Cytoplasmic. A helical transmembrane segment spans residues 196–216 (ALAHFVWIAPLQVMLLMGLLW). At 217–222 (DLLQAS) the chain is on the extracellular side. A helical membrane pass occupies residues 223–243 (AFCGLAVLVVLVLFQAWLGHR). Residues 244-298 (MMKYRDRRAGKINERLVITAEIIENIQSVKAYCWEEAMENMIESLRETELKLTRK) are Cytoplasmic-facing. A helical membrane pass occupies residues 299 to 319 (AAYMRYFNSSAFFFSGFFVVF). The Extracellular segment spans residues 320 to 339 (LSVLPSMLTKGIVLRKIFTT). Residues 340-358 (ISFCIVLRMAVTRQFPWAV) form a helical membrane-spanning segment. Topologically, residues 359 to 859 (QMWYDSIGAI…YLRYMTIHKK (501 aa)) are cytoplasmic. ATP-binding positions include Trp401, Ser434, 458–465 (GSTGAGKT), and Gln493. The ABC transporter 1 domain maps to 423–646 (SDDKNLIFSN…RPDFSSKLMG (224 aa)). Cys524 carries the S-palmitoyl cysteine lipid modification. Phosphoserine occurs at positions 549 and 660. The disordered R region stretch occupies residues 654–832 (SAERRNSILT…EEINEEDLKE (179 aa)). Ser670 is subject to Phosphoserine; by PKA. Ser686 carries the phosphoserine modification. Lys688 participates in a covalent cross-link: Glycyl lysine isopeptide (Lys-Gly) (interchain with G-Cter in ubiquitin). Phosphoserine occurs at positions 700, 712, 737, 768, 791, 796, and 814. A helical transmembrane segment spans residues 860 to 880 (LIFVLMMCLVIFLIEVAASLV). In terms of domain architecture, ABC transmembrane type-1 2 spans 860 to 1159 (LIFVLMMCLV…AVNASIDVDS (300 aa)). Residues 881–922 (GLCLFKDGASRMNSTSNLNHTSTLDWFAVIVTNTSTYYMFYI) are Extracellular-facing. N-linked (GlcNAc...) asparagine glycosylation is found at Asn893, Asn899, and Asn913. The discontinuously helical transmembrane segment at 923-943 (YVGVADTLLALGFLRGLPLVH) threads the bilayer. Over 944–994 (SLISVSKILHQKMLHSVLQAPMSTFNTLKTGSILNRFSKDMAILDDLLPLT) the chain is Cytoplasmic. The chain crosses the membrane as a helical span at residues 995-1015 (IFDFIQLLLIVIGAVTVVSAL). Topologically, residues 1016-1017 (QP) are extracellular. Residues 1018–1038 (YIFLASVPVVIAFVLLRAYFL) form a helical membrane-spanning segment. Residues 1039–1099 (RTSQQLKQLE…TANWFLYLST (61 aa)) are Cytoplasmic-facing. Residues 1100–1120 (LRWFQMRIEMVFVIFFILVTF) form a helical membrane-spanning segment. The Extracellular portion of the chain corresponds to 1121–1134 (ISILTTGDGEGKVG). Residues 1135–1155 (IVLTLAMNIMGTLQWAVNASI) traverse the membrane as a helical segment. The Cytoplasmic portion of the chain corresponds to 1156-1484 (DVDSLMRSVS…TEEEVQDTRL (329 aa)). The ABC transporter 2 domain occupies 1212-1445 (MTVQDLTAKY…KSVFKQAISH (234 aa)). Residues Tyr1221 and 1246-1253 (GRTGSGKS) each bind ATP. Residues 1388-1484 (KTLKQAFTNC…TEEEVQDTRL (97 aa)) are interaction with GORASP2. Cys1397 is lipidated: S-palmitoyl cysteine. Phosphoserine occurs at positions 1446 and 1460. Residues 1463–1484 (LSRPKITALQEETEEEVQDTRL) are disordered. A compositionally biased stretch (acidic residues) spans 1473–1484 (EETEEEVQDTRL). The PDZ-binding motif lies at 1482-1484 (TRL).

The protein belongs to the ABC transporter superfamily. ABCC family. CFTR transporter (TC 3.A.1.202) subfamily. As to quaternary structure, monomer; does not require oligomerization for channel activity. May form oligomers in the membrane. Interacts with SLC26A3, SLC26A6 and NHERF1. Interacts with SHANK2. Interacts with MYO6. Interacts (via C-terminus) with GOPC (via PDZ domain); this promotes CFTR internalization and thereby decreases channel activity. Interacts with SLC4A7 through NHERF1. Found in a complex with MYO5B and RAB11A. Interacts with ANO1. Interacts with SLC26A8. Interacts with AHCYL1; the interaction increases CFTR activity. Interacts with CSE1L. The core-glycosylated form interacts with GORASP2 (via PDZ GRASP-type 1 domain) in respone to ER stress. Interacts with MARCHF2; the interaction leads to CFTR ubiqtuitination and degradation. Interacts with ADGRG2. In terms of processing, N-glycosylated. Post-translationally, phosphorylated; cAMP treatment promotes phosphorylation and activates the channel. Dephosphorylation decreases the ATPase activity (in vitro). Phosphorylation at PKA sites activates the channel. Phosphorylation at PKC sites enhances the response to phosphorylation by PKA. Phosphorylated by AMPK; this inhibits channel activity. Ubiquitinated, leading to its degradation in the lysosome. Deubiquitination by USP10 in early endosomes enhances its endocytic recycling to the cell membrane. Ubiquitinated by RNF185 during ER stress. Ubiquitinated by MARCHF2.

It is found in the apical cell membrane. Its subcellular location is the early endosome membrane. It localises to the cell membrane. The protein localises to the recycling endosome membrane. The protein resides in the endoplasmic reticulum membrane. It is found in the nucleus. It catalyses the reaction ATP + H2O + closed Cl(-) channel = ADP + phosphate + open Cl(-) channel.. It carries out the reaction chloride(in) = chloride(out). The enzyme catalyses hydrogencarbonate(in) = hydrogencarbonate(out). The catalysed reaction is ATP + H2O = ADP + phosphate + H(+). Its function is as follows. Epithelial ion channel that plays an important role in the regulation of epithelial ion and water transport and fluid homeostasis. Mediates the transport of chloride ions across the cell membrane. Possesses an intrinsic ATPase activity and utilizes ATP to gate its channel; the passive flow of anions through the channel is gated by cycles of ATP binding and hydrolysis by the ATP-binding domains. The ion channel is also permeable to HCO(3)(-); selectivity depends on the extracellular chloride concentration. Exerts its function also by modulating the activity of other ion channels and transporters. Contributes to the regulation of the pH and the ion content of the epithelial fluid layer. Modulates the activity of the epithelial sodium channel (ENaC) complex, in part by regulating the cell surface expression of the ENaC complex. May regulate bicarbonate secretion and salvage in epithelial cells by regulating the transporter SLC4A7. Can inhibit the chloride channel activity of ANO1. Plays a role in the chloride and bicarbonate homeostasis during sperm epididymal maturation and capacitation. The protein is Cystic fibrosis transmembrane conductance regulator of Ornithorhynchus anatinus (Duckbill platypus).